The primary structure comprises 222 residues: uncharacterized protein (222 aa).

The stretch at 43–73 (SQNEEFEYEMERMLSILNEQTMDLTQLQSRI) forms a coiled coil.

This is an uncharacterized protein from Rickettsia conorii (strain ATCC VR-613 / Malish 7).